The primary structure comprises 260 residues: Voltage-dependent calcium channel gamma-6 subunit (260 aa).

The tract at residues 14 to 33 (RRGAAGRRRAHGQGRSGLTP) is disordered. Residues 15–25 (RGAAGRRRAHG) are compositionally biased toward basic residues. The next 4 helical transmembrane spans lie at 43 to 63 (LLLA…EFWV), 143 to 163 (VIAV…IMVL), 169 to 189 (FLLR…LVSL), and 221 to 241 (LGCG…FLLL).

It belongs to the PMP-22/EMP/MP20 family. CACNG subfamily. In terms of assembly, interacts with CACNA1C. Identified in a complex with the L-type calcium channel subunits CACNA1C, CACNA2D1 and either CACNB1 or CACNB2. In terms of tissue distribution, detected in heart left ventricle.

The protein resides in the cell membrane. Regulates the activity of L-type calcium channels that contain CACNA1C as pore-forming subunit. In Homo sapiens (Human), this protein is Voltage-dependent calcium channel gamma-6 subunit (CACNG6).